Reading from the N-terminus, the 405-residue chain is BRCA1-A complex subunit Abraxas 1 (405 aa).

In terms of domain architecture, MPN spans 7–154 (LGVLSGFVLG…CTHCLEHGLY (148 aa)). Position 48 is a phosphoserine (serine 48). Residues 208–262 (SLKEVRKINEMYAAIQEELKTICQKVEQSEREVEKLLMDVNRLKEVRKKQQAQAK) adopt a coiled-coil conformation. The segment at 333–405 (ASPAPAAPLS…DTDYPRSPTF (73 aa)) is disordered. Phosphoserine is present on residues serine 382, serine 383, serine 392, and serine 402. A compositionally biased stretch (acidic residues) spans 386–397 (IDTEVGSPEDDT). The short motif at 402-405 (SPTF) is the pSXXF motif element.

Belongs to the FAM175 family. Abraxas subfamily. Component of the ARISC complex, at least composed of UIMC1/RAP80, ABRAXAS1, BRCC3/BRCC36, BABAM2 and BABAM1/NBA1. Component of the BRCA1-A complex, at least composed of the BRCA1, BARD1, UIMC1/RAP80, ABRAXAS1, BRCC3/BRCC36, BABAM2 and BABAM1/NBA1. In the complex, interacts directly with UIMC1/RAP80, BRCC3/BRCC36 and BABAM2. Homodimer. Interacts directly (when phosphorylated at Ser-402) with BRCA1. The phosphorylated homodimer can interact directly with two BRCA1 chains, giving rise to a heterotetramer. Binds polyubiquitin. In terms of processing, phosphorylation of Ser-402 of the pSXXF motif by ATM or ATR constitutes a specific recognition motif for the BRCT domain of BRCA1.

It localises to the nucleus. In terms of biological role, involved in DNA damage response and double-strand break (DSB) repair. Component of the BRCA1-A complex, acting as a central scaffold protein that assembles the various components of the complex and mediates the recruitment of BRCA1. The BRCA1-A complex specifically recognizes 'Lys-63'-linked ubiquitinated histones H2A and H2AX at DNA lesion sites, leading to target the BRCA1-BARD1 heterodimer to sites of DNA damage at DSBs. This complex also possesses deubiquitinase activity that specifically removes 'Lys-63'-linked ubiquitin on histones H2A and H2AX. This is BRCA1-A complex subunit Abraxas 1 from Rattus norvegicus (Rat).